Here is a 388-residue protein sequence, read N- to C-terminus: Succinate--CoA ligase [ADP-forming] subunit beta (388 aa).

The ATP-grasp domain maps to 9–244; that stretch reads KELFARRGLP…VTQEDAREAH (236 aa). ATP-binding positions include Lys-46, 53–55, Glu-99, Thr-102, and Glu-107; that span reads GRG. Residues Asn-199 and Asp-213 each contribute to the Mg(2+) site. Substrate contacts are provided by residues Asn-264 and 321 to 323; that span reads GIV.

The protein belongs to the succinate/malate CoA ligase beta subunit family. In terms of assembly, heterotetramer of two alpha and two beta subunits. The cofactor is Mg(2+).

The enzyme catalyses succinate + ATP + CoA = succinyl-CoA + ADP + phosphate. It carries out the reaction GTP + succinate + CoA = succinyl-CoA + GDP + phosphate. It functions in the pathway carbohydrate metabolism; tricarboxylic acid cycle; succinate from succinyl-CoA (ligase route): step 1/1. Functionally, succinyl-CoA synthetase functions in the citric acid cycle (TCA), coupling the hydrolysis of succinyl-CoA to the synthesis of either ATP or GTP and thus represents the only step of substrate-level phosphorylation in the TCA. The beta subunit provides nucleotide specificity of the enzyme and binds the substrate succinate, while the binding sites for coenzyme A and phosphate are found in the alpha subunit. This chain is Succinate--CoA ligase [ADP-forming] subunit beta, found in Hamiltonella defensa subsp. Acyrthosiphon pisum (strain 5AT).